The chain runs to 174 residues: Disulfide bond formation protein B (174 aa).

The Cytoplasmic segment spans residues 1–14 (MLHIFYIYSKSRKF). Residues 15 to 31 (WAILICSSISLISIALL) traverse the membrane as a helical segment. The Periplasmic portion of the chain corresponds to 32-49 (NQFFFLLKPCILCIYQRC). A disulfide bridge connects residues cysteine 41 and cysteine 44. Residues 50 to 65 (SLFGITIAGLIALISP) form a helical membrane-spanning segment. Residues 66 to 72 (KTTLLRL) lie on the Cytoplasmic side of the membrane. Residues 73–90 (FSIFIWLYSAIKGLYFSN) traverse the membrane as a helical segment. Over 91–146 (IHMQTTLHPSSSLTCDLFVSFPNWLPLNKWYPIIFDSKISNCYSYPQYLLYLEISQ) the chain is Periplasmic. Cysteine 105 and cysteine 132 are disulfide-bonded. A helical transmembrane segment spans residues 147–165 (WMLLFFLIYLIIAIFTIIS). Topologically, residues 166-174 (QCHNLFQKK) are cytoplasmic.

Belongs to the DsbB family.

Its subcellular location is the cell inner membrane. Functionally, required for disulfide bond formation in some periplasmic proteins. Acts by oxidizing the DsbA protein. The protein is Disulfide bond formation protein B of Blochmanniella floridana.